The sequence spans 541 residues: Eukaryotic translation initiation factor 3 subunit E (541 aa).

The PCI domain maps to 252 to 443 (VEMFLSPVYL…GMVFMNPTHP (192 aa)). Positions 466 to 541 (AIDRKAHPPS…QQPAQAIAAN (76 aa)) are disordered. The span at 490–502 (NAGGRGGRGGQRN) shows a compositional bias: gly residues. Residues 506-522 (QRDRSHAHNNEAKREGE) are compositionally biased toward basic and acidic residues. Residues 523–541 (SASAEEAQQQQPAQAIAAN) show a composition bias toward low complexity.

This sequence belongs to the eIF-3 subunit E family. In terms of assembly, component of the eukaryotic translation initiation factor 3 (eIF-3) complex.

It localises to the cytoplasm. In terms of biological role, component of the eukaryotic translation initiation factor 3 (eIF-3) complex, which is involved in protein synthesis of a specialized repertoire of mRNAs and, together with other initiation factors, stimulates binding of mRNA and methionyl-tRNAi to the 40S ribosome. The eIF-3 complex specifically targets and initiates translation of a subset of mRNAs involved in cell proliferation. The polypeptide is Eukaryotic translation initiation factor 3 subunit E (Mycosarcoma maydis (Corn smut fungus)).